Here is a 610-residue protein sequence, read N- to C-terminus: UvrABC system protein C (610 aa).

In terms of domain architecture, GIY-YIG spans 16-94; sequence SQPGVYRMYD…IKLYQPRYNV (79 aa). Residues 204–239 form the UVR domain; that stretch reads DQVLTQLISRMETASQNLEFEEAARIRDQIQAVRRV.

Belongs to the UvrC family. In terms of assembly, interacts with UvrB in an incision complex.

It is found in the cytoplasm. The UvrABC repair system catalyzes the recognition and processing of DNA lesions. UvrC both incises the 5' and 3' sides of the lesion. The N-terminal half is responsible for the 3' incision and the C-terminal half is responsible for the 5' incision. The protein is UvrABC system protein C of Escherichia coli (strain SMS-3-5 / SECEC).